The following is a 248-amino-acid chain: 14-3-3 protein homolog 2 (248 aa).

Belongs to the 14-3-3 family.

The chain is 14-3-3 protein homolog 2 from Echinococcus multilocularis (Fox tapeworm).